The chain runs to 225 residues: Sugar fermentation stimulation protein homolog (225 aa).

The protein belongs to the SfsA family.

The polypeptide is Sugar fermentation stimulation protein homolog (Sulfurisphaera tokodaii (strain DSM 16993 / JCM 10545 / NBRC 100140 / 7) (Sulfolobus tokodaii)).